We begin with the raw amino-acid sequence, 661 residues long: Immunoglobulin-like domain-containing receptor 2 (661 aa).

Positions 1-35 (MPAFPTLDLDGKLGKMDRVVLGWTAVFWLTAMVEG) are cleaved as a signal peptide. Residues 36–177 (LQVTVPDKKK…LEGKNEDSVE (142 aa)) form the Ig-like V-type domain. The Lumenal portion of the chain corresponds to 36–201 (LQVTVPDKKK…PSFAVEIMPE (166 aa)). Cys-57 and Cys-160 form a disulfide bridge. Residues 202-222 (WVFVGLVILGIFLFFVLVGIC) traverse the membrane as a helical segment. Over 223–661 (WCQCCPHSCC…DFPTRMSLVV (439 aa)) the chain is Cytoplasmic. Disordered stretches follow at residues 288-310 (LMDKPHPPPLAPSDSTGGSHSVR), 410-429 (EDRESFRHSQQRSKSEMLSR), and 453-661 (QRSR…SLVV). 2 stretches are compositionally biased toward basic and acidic residues: residues 410-428 (EDRESFRHSQQRSKSEMLS) and 463-478 (HEARAGSRFERSESRA). Ser-487 carries the post-translational modification Phosphoserine. A compositionally biased stretch (basic and acidic residues) spans 491–506 (YYGRGRSREPPGDGER). The residue at position 559 (Arg-559) is an Omega-N-methylarginine. The residue at position 594 (Ser-594) is a Phosphoserine. A compositionally biased stretch (acidic residues) spans 595 to 607 (EGEDEDDAADEDA). Residues 628-639 (RGRDLSFHSNSE) are compositionally biased toward basic and acidic residues.

It belongs to the immunoglobulin superfamily. LISCH7 family. In terms of assembly, interacts with MARVELD2 and OCLN. Interacts with P4HB and HSPA5; the interaction with HSPA5 stabilizes ILDR2 expression. Interacts (via C-terminus) with TRA2A, TRA2B and SRSF1. As to expression, expressed in epithelial tissues, mainly in liver, kidney and colon.

The protein localises to the endoplasmic reticulum membrane. It is found in the cell junction. It localises to the tight junction. Its subcellular location is the nucleus. In terms of biological role, may be involved in ER stress pathways with effects on lipid homeostasis and insulin secretion. With ILDR1 and LSR, involved in the maintain of the epithelial barrier function through the recruitment of MARVELD2/tricellulin to tricellular tight junctions. Also functions as a B7-like protein family member expressed on immune cells and inflamed tissue and with T-cell inhibitory activity. In the inner ear, may regulate alternative pre-mRNA splicing via binding to TRA2A, TRA2B and SRSF1. The polypeptide is Immunoglobulin-like domain-containing receptor 2 (Mus musculus (Mouse)).